Reading from the N-terminus, the 95-residue chain is Ferredoxin-4 (95 aa).

The 94-residue stretch at 2-95 (DKATLTFTDV…LGGAVKVRPA (94 aa)) folds into the 2Fe-2S ferredoxin-type domain. [2Fe-2S] cluster is bound by residues Cys38, Cys43, Cys46, and Cys81.

The protein belongs to the 2Fe2S plant-type ferredoxin family. Requires [2Fe-2S] cluster as cofactor.

In terms of biological role, ferredoxins are iron-sulfur proteins that transfer electrons in a wide variety of metabolic reactions. This ferredoxin is required for nitrogen fixation. The sequence is that of Ferredoxin-4 (fdxC) from Rhodobacter capsulatus (Rhodopseudomonas capsulata).